Reading from the N-terminus, the 475-residue chain is Ribulose bisphosphate carboxylase large chain (475 aa).

Residues asparagine 123 and threonine 173 each contribute to the substrate site. Lysine 175 acts as the Proton acceptor in catalysis. Lysine 177 contacts substrate. Positions 201, 203, and 204 each coordinate Mg(2+). Lysine 201 carries the N6-carboxylysine modification. Histidine 294 functions as the Proton acceptor in the catalytic mechanism. Substrate contacts are provided by arginine 295, histidine 327, and serine 379.

It belongs to the RuBisCO large chain family. Type I subfamily. Heterohexadecamer of 8 large chains and 8 small chains. Mg(2+) serves as cofactor.

Its subcellular location is the plastid. The protein localises to the cyanelle. The catalysed reaction is 2 (2R)-3-phosphoglycerate + 2 H(+) = D-ribulose 1,5-bisphosphate + CO2 + H2O. It catalyses the reaction D-ribulose 1,5-bisphosphate + O2 = 2-phosphoglycolate + (2R)-3-phosphoglycerate + 2 H(+). In terms of biological role, ruBisCO catalyzes two reactions: the carboxylation of D-ribulose 1,5-bisphosphate, the primary event in carbon dioxide fixation, as well as the oxidative fragmentation of the pentose substrate in the photorespiration process. Both reactions occur simultaneously and in competition at the same active site. In Cyanophora paradoxa, this protein is Ribulose bisphosphate carboxylase large chain.